A 339-amino-acid polypeptide reads, in one-letter code: DNA-directed RNA polymerase subunit alpha (339 aa).

Residues 1–235 are alpha N-terminal domain (alpha-NTD); sequence MTIQKNWQEL…DQLNVFVNFE (235 aa). Residues 251 to 339 form an alpha C-terminal domain (alpha-CTD) region; the sequence is FNPAFLKKVD…ELAKRFEDHY (89 aa).

Belongs to the RNA polymerase alpha chain family. In terms of assembly, homodimer. The RNAP catalytic core consists of 2 alpha, 1 beta, 1 beta' and 1 omega subunit. When a sigma factor is associated with the core the holoenzyme is formed, which can initiate transcription.

It carries out the reaction RNA(n) + a ribonucleoside 5'-triphosphate = RNA(n+1) + diphosphate. DNA-dependent RNA polymerase catalyzes the transcription of DNA into RNA using the four ribonucleoside triphosphates as substrates. This chain is DNA-directed RNA polymerase subunit alpha, found in Rhodopseudomonas palustris (strain BisB5).